A 28-amino-acid polypeptide reads, in one-letter code: Grammistin Gs A (28 aa).

This sequence belongs to the grammistin family. Group 3 subfamily. Exists as aggregates of 3-4 molecules. In terms of tissue distribution, expressed by the skin glands.

Its subcellular location is the secreted. Functionally, thanks to its amphiphilic alpha-helice(s), it may integrate into membrane phospholipids, leading to lysis of the membrane. Has no substantial hemolytic activity. Has antibacterial activity with a broad spectrum against various species of bacteria including both Gram-positive and Gram-negative groups. The sequence is that of Grammistin Gs A from Grammistes sexlineatus (Goldenstriped soapfish).